A 163-amino-acid chain; its full sequence is Large ribosomal subunit protein uL10 (163 aa).

The protein belongs to the universal ribosomal protein uL10 family. Part of the ribosomal stalk of the 50S ribosomal subunit. The N-terminus interacts with L11 and the large rRNA to form the base of the stalk. The C-terminus forms an elongated spine to which L12 dimers bind in a sequential fashion forming a multimeric L10(L12)X complex.

Forms part of the ribosomal stalk, playing a central role in the interaction of the ribosome with GTP-bound translation factors. The polypeptide is Large ribosomal subunit protein uL10 (Haemophilus influenzae (strain 86-028NP)).